Here is a 337-residue protein sequence, read N- to C-terminus: Casein kinase I isoform alpha (337 aa).

The residue at position 2 (Ala-2) is an N-acetylalanine. The residue at position 4 (Ser-4) is a Phosphoserine. Lys-8 bears the N6-acetyllysine mark. The 269-residue stretch at 17-285 folds into the Protein kinase domain; sequence YKLVRKIGSG…YLRQLFRILF (269 aa). Residues 23 to 31 and Lys-46 each bind ATP; that span reads IGSGSFGDI. Asp-136 functions as the Proton acceptor in the catalytic mechanism. The span at 309-325 shows a compositional bias: low complexity; it reads AASSSGQGQQAQTPTGK. Residues 309-337 form a disordered region; the sequence is AASSSGQGQQAQTPTGKQTDKTKSNMKGF.

Belongs to the protein kinase superfamily. CK1 Ser/Thr protein kinase family. Casein kinase I subfamily. Interacts with the Axin complex. Interacts with TUT1, leading to TUT1 phosphorylation. Interacts with FAM83A, FAM83B, FAM83C, FAM83D, FAM83E, FAM83F, FAM83G and FAM83H (via DUF1669). Interaction with FAM83H recruits CSNK1A1 to keratin filaments. In terms of processing, phosphorylated by MTOR in response to mitogenic stimulation, leading to its activation.

It is found in the cytoplasm. Its subcellular location is the cytoskeleton. The protein resides in the microtubule organizing center. It localises to the centrosome. The protein localises to the chromosome. It is found in the centromere. Its subcellular location is the kinetochore. The protein resides in the nucleus speckle. It localises to the cilium basal body. The protein localises to the spindle. It catalyses the reaction L-seryl-[protein] + ATP = O-phospho-L-seryl-[protein] + ADP + H(+). It carries out the reaction L-threonyl-[protein] + ATP = O-phospho-L-threonyl-[protein] + ADP + H(+). Its function is as follows. Casein kinases are operationally defined by their preferential utilization of acidic proteins such as caseins as substrates. Can phosphorylate a large number of proteins. Participates in Wnt signaling. Phosphorylates CTNNB1 at 'Ser-45'. May phosphorylate PER1 and PER2. May play a role in segregating chromosomes during mitosis. May play a role in keratin cytoskeleton disassembly and thereby, it may regulate epithelial cell migration. Acts as a positive regulator of mTORC1 and mTORC2 signaling in response to nutrients by mediating phosphorylation of DEPTOR inhibitor. Acts as an inhibitor of NLRP3 inflammasome assembly by mediating phosphorylation of NLRP3. The protein is Casein kinase I isoform alpha (Csnk1a1) of Mus musculus (Mouse).